Consider the following 336-residue polypeptide: NADH-quinone oxidoreductase subunit H (336 aa).

8 helical membrane-spanning segments follow: residues Leu-9 to Ala-29, Phe-77 to Phe-97, Leu-116 to Gly-136, Ile-156 to Leu-176, Leu-188 to Leu-208, Ile-236 to Met-256, Ile-275 to Ile-295, and Val-315 to Ile-335.

This sequence belongs to the complex I subunit 1 family. As to quaternary structure, NDH-1 is composed of 14 different subunits. Subunits NuoA, H, J, K, L, M, N constitute the membrane sector of the complex.

It is found in the cell inner membrane. The catalysed reaction is a quinone + NADH + 5 H(+)(in) = a quinol + NAD(+) + 4 H(+)(out). NDH-1 shuttles electrons from NADH, via FMN and iron-sulfur (Fe-S) centers, to quinones in the respiratory chain. The immediate electron acceptor for the enzyme in this species is believed to be ubiquinone. Couples the redox reaction to proton translocation (for every two electrons transferred, four hydrogen ions are translocated across the cytoplasmic membrane), and thus conserves the redox energy in a proton gradient. This subunit may bind ubiquinone. This Neorickettsia sennetsu (strain ATCC VR-367 / Miyayama) (Ehrlichia sennetsu) protein is NADH-quinone oxidoreductase subunit H.